A 551-amino-acid chain; its full sequence is Calcium-dependent protein kinase 3 (551 aa).

The disordered stretch occupies residues 1–57; sequence MGNCCRSPAAAAREDVKSSHFPASAGKKKPHQARNGGVGGGGGGGGGGGGGGGAGQK. Residue glycine 2 is the site of N-myristoyl glycine attachment. Positions 36–55 are enriched in gly residues; sequence GGVGGGGGGGGGGGGGGGAG. One can recognise a Protein kinase domain in the interval 77 to 335; it reads YALDRELGRG…AKQVLEHPWL (259 aa). ATP is bound by residues 83–91 and lysine 106; that span reads LGRGEFGVT. The active-site Proton acceptor is aspartate 201. Residues 341–371 form an autoinhibitory domain region; it reads APNVPLGDIVKSRLKQFSRMNRFKRRALRVI. EF-hand domains follow at residues 378-413, 414-449, 450-485, and 486-521; these read EEVEDIKEMFKAMDTDNDGIVSYEELKSGIAKFGSH, LAESEVQMLIEAVDTNGKDALDYGEFLAVSLHLQRM, ANDEHLRRAFLFFDKDGNGYIEPEELREALVDDGAG, and DSMEVVNDILQEVDTDKDGKISYDEFVAMMKTGTDW. The Ca(2+) site is built by aspartate 391, aspartate 393, aspartate 395, glutamate 402, aspartate 427, asparagine 429, glutamate 438, aspartate 463, aspartate 465, asparagine 467, tyrosine 469, glutamate 474, aspartate 499, aspartate 501, aspartate 503, lysine 505, and glutamate 510.

Belongs to the protein kinase superfamily. Ser/Thr protein kinase family. CDPK subfamily. As to expression, expressed in roots and developing seeds.

The protein localises to the membrane. It carries out the reaction L-seryl-[protein] + ATP = O-phospho-L-seryl-[protein] + ADP + H(+). It catalyses the reaction L-threonyl-[protein] + ATP = O-phospho-L-threonyl-[protein] + ADP + H(+). Activated by calcium. Autophosphorylation may play an important role in the regulation of the kinase activity. Functionally, may play a role in signal transduction pathways that involve calcium as a second messenger. This chain is Calcium-dependent protein kinase 3, found in Oryza sativa subsp. japonica (Rice).